A 340-amino-acid chain; its full sequence is Heat-inducible transcription repressor HrcA (340 aa).

It belongs to the HrcA family.

Negative regulator of class I heat shock genes (grpE-dnaK-dnaJ and groELS operons). Prevents heat-shock induction of these operons. The polypeptide is Heat-inducible transcription repressor HrcA (Burkholderia ambifaria (strain MC40-6)).